Consider the following 147-residue polypeptide: Large ribosomal subunit protein uL15 (147 aa).

Positions 1–11 are enriched in basic and acidic residues; that stretch reads MKLHDLRPAKD. Positions 1-57 are disordered; sequence MKLHDLRPAKDAKKKRKRVGRGTGSGRGFTSGRGSKGQNARSGGGVRPTFEGGQTPL. Over residues 21-35 the composition is skewed to gly residues; the sequence is RGTGSGRGFTSGRGS.

The protein belongs to the universal ribosomal protein uL15 family. Part of the 50S ribosomal subunit.

Functionally, binds to the 23S rRNA. This Halothermothrix orenii (strain H 168 / OCM 544 / DSM 9562) protein is Large ribosomal subunit protein uL15.